The following is a 310-amino-acid chain: Elongation factor Ts (310 aa).

The tract at residues 80–83 (TDFV) is involved in Mg(2+) ion dislocation from EF-Tu.

It belongs to the EF-Ts family.

It localises to the cytoplasm. Functionally, associates with the EF-Tu.GDP complex and induces the exchange of GDP to GTP. It remains bound to the aminoacyl-tRNA.EF-Tu.GTP complex up to the GTP hydrolysis stage on the ribosome. The protein is Elongation factor Ts of Methylocella silvestris (strain DSM 15510 / CIP 108128 / LMG 27833 / NCIMB 13906 / BL2).